Here is a 324-residue protein sequence, read N- to C-terminus: Leucine carboxyl methyltransferase 1 (324 aa).

Residues arginine 74, glycine 101, aspartate 128, 172–173 (DL), and glutamate 196 each bind S-adenosyl-L-methionine.

It belongs to the methyltransferase superfamily. LCMT family.

The catalysed reaction is [phosphatase 2A protein]-C-terminal L-leucine + S-adenosyl-L-methionine = [phosphatase 2A protein]-C-terminal L-leucine methyl ester + S-adenosyl-L-homocysteine. Functionally, methylates the carboxyl group of the C-terminal leucine residue of protein phosphatase 2A catalytic subunits to form alpha-leucine ester residues. The chain is Leucine carboxyl methyltransferase 1 (PPM1) from Yarrowia lipolytica (strain CLIB 122 / E 150) (Yeast).